A 257-amino-acid polypeptide reads, in one-letter code: tRNA pseudouridine synthase A (257 aa).

D43 functions as the Nucleophile in the catalytic mechanism. Y94 contacts substrate.

It belongs to the tRNA pseudouridine synthase TruA family.

It carries out the reaction uridine(38/39/40) in tRNA = pseudouridine(38/39/40) in tRNA. Its function is as follows. Formation of pseudouridine at positions 38, 39 and 40 in the anticodon stem and loop of transfer RNAs. The polypeptide is tRNA pseudouridine synthase A (Pyrobaculum calidifontis (strain DSM 21063 / JCM 11548 / VA1)).